The primary structure comprises 214 residues: Cytochrome b (214 aa).

4 helical membrane-spanning segments follow: residues Phe-31–Ile-51, Trp-75–Ile-96, Trp-111–Leu-131, and Phe-176–Leu-196. Residues His-81 and His-95 each coordinate heme b. His-180 and His-194 together coordinate heme b. Residue His-199 participates in a ubiquinone binding.

It belongs to the cytochrome b family. As to quaternary structure, the cytochrome bc1 complex contains 3 respiratory subunits (MT-CYB, CYC1 and UQCRFS1), 2 core proteins (UQCRC1 and UQCRC2) and probably 6 low-molecular weight proteins. Heme b is required as a cofactor.

The protein resides in the mitochondrion inner membrane. Its function is as follows. Component of the ubiquinol-cytochrome c reductase complex (complex III or cytochrome b-c1 complex) that is part of the mitochondrial respiratory chain. The b-c1 complex mediates electron transfer from ubiquinol to cytochrome c. Contributes to the generation of a proton gradient across the mitochondrial membrane that is then used for ATP synthesis. In Lachesis muta muta (Bushmaster), this protein is Cytochrome b (MT-CYB).